Consider the following 273-residue polypeptide: Undecaprenyl-diphosphatase (273 aa).

7 consecutive transmembrane segments (helical) span residues 4 to 24 (LILL…FLPI), 43 to 63 (KAKV…CWEY), 82 to 102 (FVIN…LFIK), 108 to 128 (LFHP…ILWA), 183 to 203 (AAEF…FYDV), 217 to 237 (MFAT…RGFI), and 248 to 268 (FAWY…SGLV).

Belongs to the UppP family.

It is found in the cell inner membrane. It catalyses the reaction di-trans,octa-cis-undecaprenyl diphosphate + H2O = di-trans,octa-cis-undecaprenyl phosphate + phosphate + H(+). Catalyzes the dephosphorylation of undecaprenyl diphosphate (UPP). Confers resistance to bacitracin. The chain is Undecaprenyl-diphosphatase from Nitrosomonas europaea (strain ATCC 19718 / CIP 103999 / KCTC 2705 / NBRC 14298).